A 261-amino-acid polypeptide reads, in one-letter code: Small ribosomal subunit protein uS2 (261 aa).

The interval 224–261 is disordered; sequence GRQGEDDEAVQQEEVAEGVSKDSLEDLKKTVEEGSNEE. Over residues 228-239 the composition is skewed to acidic residues; the sequence is EDDEAVQQEEVA. Residues 242-255 are compositionally biased toward basic and acidic residues; that stretch reads VSKDSLEDLKKTVE.

This sequence belongs to the universal ribosomal protein uS2 family.

The polypeptide is Small ribosomal subunit protein uS2 (rpsB) (Pediococcus acidilactici).